We begin with the raw amino-acid sequence, 484 residues long: tRNA sulfurtransferase (484 aa).

The THUMP domain maps to 63–167 (REMIERLCCT…DQRLFVVHRQ (105 aa)). ATP-binding positions include 185 to 186 (LM), Lys267, Gly289, and Gln298. A disulfide bridge links Cys346 with Cys457. The Rhodanese domain occupies 405 to 483 (ALAGQIVLDI…GHANVRVYRP (79 aa)). Cys457 serves as the catalytic Cysteine persulfide intermediate.

Belongs to the ThiI family.

The protein resides in the cytoplasm. It catalyses the reaction [ThiI sulfur-carrier protein]-S-sulfanyl-L-cysteine + a uridine in tRNA + 2 reduced [2Fe-2S]-[ferredoxin] + ATP + H(+) = [ThiI sulfur-carrier protein]-L-cysteine + a 4-thiouridine in tRNA + 2 oxidized [2Fe-2S]-[ferredoxin] + AMP + diphosphate. It carries out the reaction [ThiS sulfur-carrier protein]-C-terminal Gly-Gly-AMP + S-sulfanyl-L-cysteinyl-[cysteine desulfurase] + AH2 = [ThiS sulfur-carrier protein]-C-terminal-Gly-aminoethanethioate + L-cysteinyl-[cysteine desulfurase] + A + AMP + 2 H(+). Its pathway is cofactor biosynthesis; thiamine diphosphate biosynthesis. In terms of biological role, catalyzes the ATP-dependent transfer of a sulfur to tRNA to produce 4-thiouridine in position 8 of tRNAs, which functions as a near-UV photosensor. Also catalyzes the transfer of sulfur to the sulfur carrier protein ThiS, forming ThiS-thiocarboxylate. This is a step in the synthesis of thiazole, in the thiamine biosynthesis pathway. The sulfur is donated as persulfide by IscS. This Azotobacter vinelandii (strain DJ / ATCC BAA-1303) protein is tRNA sulfurtransferase.